Consider the following 268-residue polypeptide: DNA repair protein RecO (268 aa).

The protein belongs to the RecO family.

Involved in DNA repair and RecF pathway recombination. This Parasynechococcus marenigrum (strain WH8102) protein is DNA repair protein RecO.